The chain runs to 491 residues: Acetyl-coenzyme A carboxylase carboxyl transferase subunit beta, chloroplastic (491 aa).

The tract at residues 28-56 (LGPIENTSESEDPNRNDMKKNSHSWGSRD) is disordered. One can recognise a CoA carboxyltransferase N-terminal domain in the interval 223 to 491 (LWVQCENCYG…FPLNKNSIEH (269 aa)). Cys227, Cys230, Cys246, and Cys249 together coordinate Zn(2+). The segment at 227-249 (CENCYGLNYKKILKSKMNLCEQC) adopts a C4-type zinc-finger fold.

The protein belongs to the AccD/PCCB family. As to quaternary structure, acetyl-CoA carboxylase is a heterohexamer composed of biotin carboxyl carrier protein, biotin carboxylase and 2 subunits each of ACCase subunit alpha and ACCase plastid-coded subunit beta (accD). Zn(2+) serves as cofactor.

Its subcellular location is the plastid. It is found in the chloroplast stroma. It catalyses the reaction N(6)-carboxybiotinyl-L-lysyl-[protein] + acetyl-CoA = N(6)-biotinyl-L-lysyl-[protein] + malonyl-CoA. The protein operates within lipid metabolism; malonyl-CoA biosynthesis; malonyl-CoA from acetyl-CoA: step 1/1. Functionally, component of the acetyl coenzyme A carboxylase (ACC) complex. Biotin carboxylase (BC) catalyzes the carboxylation of biotin on its carrier protein (BCCP) and then the CO(2) group is transferred by the transcarboxylase to acetyl-CoA to form malonyl-CoA. The chain is Acetyl-coenzyme A carboxylase carboxyl transferase subunit beta, chloroplastic from Daucus carota (Wild carrot).